The primary structure comprises 393 residues: F-box/kelch-repeat protein At4g19865 (393 aa).

The interval 1-30 is disordered; that stretch reads MNFQVEPPEKKKTKNSSPPHSPPSSSSPSL. The region spanning 27–73 is the F-box domain; the sequence is SPSLSLLPEEIVVHCLARISRLYYPTLSLVSKSFRSILSSTELYATR. Kelch repeat units follow at residues 148 to 190, 191 to 237, 239 to 272, and 273 to 320; these read EIYV…FHDG, KIYV…RSGV, EGKI…ALRS, and ECMI…GGSS.

The chain is F-box/kelch-repeat protein At4g19865 from Arabidopsis thaliana (Mouse-ear cress).